We begin with the raw amino-acid sequence, 349 residues long: Nicotinate-nucleotide--dimethylbenzimidazole phosphoribosyltransferase (349 aa).

E318 acts as the Proton acceptor in catalysis.

The protein belongs to the CobT family.

It catalyses the reaction 5,6-dimethylbenzimidazole + nicotinate beta-D-ribonucleotide = alpha-ribazole 5'-phosphate + nicotinate + H(+). It participates in nucleoside biosynthesis; alpha-ribazole biosynthesis; alpha-ribazole from 5,6-dimethylbenzimidazole: step 1/2. In terms of biological role, catalyzes the synthesis of alpha-ribazole-5'-phosphate from nicotinate mononucleotide (NAMN) and 5,6-dimethylbenzimidazole (DMB). This is Nicotinate-nucleotide--dimethylbenzimidazole phosphoribosyltransferase from Geobacter sp. (strain M21).